A 79-amino-acid chain; its full sequence is Putative membrane protein insertion efficiency factor (79 aa).

It belongs to the UPF0161 family.

Its subcellular location is the cell inner membrane. Could be involved in insertion of integral membrane proteins into the membrane. The polypeptide is Putative membrane protein insertion efficiency factor (Thermotoga neapolitana (strain ATCC 49049 / DSM 4359 / NBRC 107923 / NS-E)).